Reading from the N-terminus, the 480-residue chain is Radical SAM Nalpha-GlyT isomerase (480 aa).

Residues cysteine 125, cysteine 129, and cysteine 132 each contribute to the iron-sulfur cluster site. The interval 457–480 is disordered; it reads KIVEPTPPEEDGGERKIIPITQID.

It catalyses the reaction 5-N(alpha)-glycyl-dTMP in DNA + AH2 + S-adenosyl-L-methionine = 5-C(alpha)-glycyl-dTMP in DNA + 5'-deoxyadenosine + L-methionine + A + H(+). In terms of biological role, isomerizes 5-N-alpha-glycinylthymidine (Nalpha-GlyT) into 5-Calpha-glycinylthymidine (Calpha-GlyT) as a step in the pathway leading to thymidine hypermodifications in the viral genome. As a final result of the pathway of hypermodification, 5-aminoethyl-2'-deoxyuridine (5-NedU) substitutes for about 30% of thymidines in the viral DNA. These modifications probably prevent degradation of viral genome by the host restriction-modification antiviral defense system. The polypeptide is Radical SAM Nalpha-GlyT isomerase (Pseudomonas phage M6).